Consider the following 171-residue polypeptide: Shikimate kinase (171 aa).

14–19 (GAGKST) serves as a coordination point for ATP. A Mg(2+)-binding site is contributed by S18. Substrate contacts are provided by D36, R60, and G82. R120 contacts ATP. R139 is a substrate binding site. Q156 serves as a coordination point for ATP.

This sequence belongs to the shikimate kinase family. Monomer. It depends on Mg(2+) as a cofactor.

Its subcellular location is the cytoplasm. The catalysed reaction is shikimate + ATP = 3-phosphoshikimate + ADP + H(+). It participates in metabolic intermediate biosynthesis; chorismate biosynthesis; chorismate from D-erythrose 4-phosphate and phosphoenolpyruvate: step 5/7. In terms of biological role, catalyzes the specific phosphorylation of the 3-hydroxyl group of shikimic acid using ATP as a cosubstrate. In Shewanella sp. (strain MR-4), this protein is Shikimate kinase.